The sequence spans 336 residues: Large ribosomal subunit protein uL1m (336 aa).

The transit peptide at 1–50 (MAAAVRCLRRVLIHHQRHCLCKMASQASLYPCSVNSLLHNRHFAAAAAAA) directs the protein to the mitochondrion. A Phosphoserine modification is found at Ser85.

It belongs to the universal ribosomal protein uL1 family.

Its subcellular location is the mitochondrion. The sequence is that of Large ribosomal subunit protein uL1m (Mrpl1) from Mus musculus (Mouse).